We begin with the raw amino-acid sequence, 447 residues long: Na(+)-translocating NADH-quinone reductase subunit A (447 aa).

Belongs to the NqrA family. Composed of six subunits; NqrA, NqrB, NqrC, NqrD, NqrE and NqrF.

It catalyses the reaction a ubiquinone + n Na(+)(in) + NADH + H(+) = a ubiquinol + n Na(+)(out) + NAD(+). Functionally, NQR complex catalyzes the reduction of ubiquinone-1 to ubiquinol by two successive reactions, coupled with the transport of Na(+) ions from the cytoplasm to the periplasm. NqrA to NqrE are probably involved in the second step, the conversion of ubisemiquinone to ubiquinol. The protein is Na(+)-translocating NADH-quinone reductase subunit A of Neisseria gonorrhoeae (strain ATCC 700825 / FA 1090).